Reading from the N-terminus, the 40-residue chain is Photosystem II reaction center protein J (40 aa).

Residues 8-28 (IPLWLIGTVAGIPVIGLVGVF) form a helical membrane-spanning segment.

It belongs to the PsbJ family. PSII is composed of 1 copy each of membrane proteins PsbA, PsbB, PsbC, PsbD, PsbE, PsbF, PsbH, PsbI, PsbJ, PsbK, PsbL, PsbM, PsbT, PsbX, PsbY, PsbZ, Psb30/Ycf12, at least 3 peripheral proteins of the oxygen-evolving complex and a large number of cofactors. It forms dimeric complexes.

The protein resides in the plastid. The protein localises to the chloroplast thylakoid membrane. In terms of biological role, one of the components of the core complex of photosystem II (PSII). PSII is a light-driven water:plastoquinone oxidoreductase that uses light energy to abstract electrons from H(2)O, generating O(2) and a proton gradient subsequently used for ATP formation. It consists of a core antenna complex that captures photons, and an electron transfer chain that converts photonic excitation into a charge separation. The chain is Photosystem II reaction center protein J from Hordeum jubatum (Foxtail barley).